A 509-amino-acid polypeptide reads, in one-letter code: ATP synthase subunit alpha (509 aa).

169–176 contacts ATP; sequence GDRQTGKT.

Belongs to the ATPase alpha/beta chains family. As to quaternary structure, F-type ATPases have 2 components, CF(1) - the catalytic core - and CF(0) - the membrane proton channel. CF(1) has five subunits: alpha(3), beta(3), gamma(1), delta(1), epsilon(1). CF(0) has three main subunits: a(1), b(2) and c(9-12). The alpha and beta chains form an alternating ring which encloses part of the gamma chain. CF(1) is attached to CF(0) by a central stalk formed by the gamma and epsilon chains, while a peripheral stalk is formed by the delta and b chains.

It is found in the cell inner membrane. It carries out the reaction ATP + H2O + 4 H(+)(in) = ADP + phosphate + 5 H(+)(out). Produces ATP from ADP in the presence of a proton gradient across the membrane. The alpha chain is a regulatory subunit. In Rhizobium etli (strain CIAT 652), this protein is ATP synthase subunit alpha.